A 260-amino-acid polypeptide reads, in one-letter code: Snake venom serine protease homolog 2 (260 aa).

The signal sequence occupies residues 1-18; that stretch reads MVLIRVLANLLVLQLSYA. Residues 19 to 24 constitute a propeptide that is removed on maturation; that stretch reads QKSSEL. The Peptidase S1 domain occupies 25–251; that stretch reads VIGGDECNIN…YTDWIQSIIA (227 aa). Intrachain disulfides connect Cys31–Cys165, Cys52–Cys68, Cys100–Cys258, Cys144–Cys212, Cys176–Cys191, and Cys202–Cys227. The N-linked (GlcNAc...) asparagine glycan is linked to Asn123. Asn253 carries an N-linked (GlcNAc...) asparagine glycan.

This sequence belongs to the peptidase S1 family. Snake venom subfamily. Expressed by the venom gland.

It is found in the secreted. Functionally, snake venom serine protease homolog that may act in the hemostasis system of the prey. In Macrovipera lebetinus (Levantine viper), this protein is Snake venom serine protease homolog 2.